The following is a 258-amino-acid chain: ER membrane protein complex subunit 3 (258 aa).

The next 3 membrane-spanning stretches (helical) occupy residues 8-28, 123-143, and 173-193; these read PALR…IGIL, VVPQ…FILL, and SISW…LLLG.

This sequence belongs to the EMC3 family.

Its subcellular location is the cytoplasm. It is found in the membrane. The chain is ER membrane protein complex subunit 3 from Schizosaccharomyces pombe (strain 972 / ATCC 24843) (Fission yeast).